The following is a 96-amino-acid chain: Putative pterin-4-alpha-carbinolamine dehydratase (96 aa).

It belongs to the pterin-4-alpha-carbinolamine dehydratase family.

It catalyses the reaction (4aS,6R)-4a-hydroxy-L-erythro-5,6,7,8-tetrahydrobiopterin = (6R)-L-erythro-6,7-dihydrobiopterin + H2O. This is Putative pterin-4-alpha-carbinolamine dehydratase from Novosphingobium aromaticivorans (strain ATCC 700278 / DSM 12444 / CCUG 56034 / CIP 105152 / NBRC 16084 / F199).